We begin with the raw amino-acid sequence, 272 residues long: Small ribosomal subunit protein uS3 (272 aa).

In terms of domain architecture, KH type-2 spans 43-111; that stretch reads IRELMTTGME…QIQLNILEVK (69 aa). Residues 218–272 form a disordered region; the sequence is AKEAAQPSGRGRGGERRGGGERRRRNDRAERAPRQENAGAGAETPAAAPAEGGNA. Over residues 229-238 the composition is skewed to basic and acidic residues; sequence RGGERRGGGE. The segment covering 253 to 272 has biased composition (low complexity); sequence ENAGAGAETPAAAPAEGGNA.

Belongs to the universal ribosomal protein uS3 family. Part of the 30S ribosomal subunit. Forms a tight complex with proteins S10 and S14.

Its function is as follows. Binds the lower part of the 30S subunit head. Binds mRNA in the 70S ribosome, positioning it for translation. The chain is Small ribosomal subunit protein uS3 from Micrococcus luteus (strain ATCC 4698 / DSM 20030 / JCM 1464 / CCM 169 / CCUG 5858 / IAM 1056 / NBRC 3333 / NCIMB 9278 / NCTC 2665 / VKM Ac-2230) (Micrococcus lysodeikticus).